Here is a 320-residue protein sequence, read N- to C-terminus: Holliday junction branch migration complex subunit RuvB (320 aa).

The segment at 1 to 172 is large ATPase domain (RuvB-L); that stretch reads MTANVCLDES…FGIISRLEYY (172 aa). ATP-binding positions include Arg-12, Gly-53, Lys-56, Thr-57, Thr-58, 119–121, Arg-162, Tyr-172, and Arg-209; that span reads EDF. Thr-57 lines the Mg(2+) pocket. Residues 173–243 form a small ATPAse domain (RuvB-S) region; the sequence is TPADLARIVA…LASEALGRME (71 aa). The head domain (RuvB-H) stretch occupies residues 246–320; that stretch reads ESGLDQMDRK…KAYRHLNLLG (75 aa). DNA contacts are provided by Arg-301 and Arg-306.

It belongs to the RuvB family. Homohexamer. Forms an RuvA(8)-RuvB(12)-Holliday junction (HJ) complex. HJ DNA is sandwiched between 2 RuvA tetramers; dsDNA enters through RuvA and exits via RuvB. An RuvB hexamer assembles on each DNA strand where it exits the tetramer. Each RuvB hexamer is contacted by two RuvA subunits (via domain III) on 2 adjacent RuvB subunits; this complex drives branch migration. In the full resolvosome a probable DNA-RuvA(4)-RuvB(12)-RuvC(2) complex forms which resolves the HJ.

The protein resides in the cytoplasm. It catalyses the reaction ATP + H2O = ADP + phosphate + H(+). The RuvA-RuvB-RuvC complex processes Holliday junction (HJ) DNA during genetic recombination and DNA repair, while the RuvA-RuvB complex plays an important role in the rescue of blocked DNA replication forks via replication fork reversal (RFR). RuvA specifically binds to HJ cruciform DNA, conferring on it an open structure. The RuvB hexamer acts as an ATP-dependent pump, pulling dsDNA into and through the RuvAB complex. RuvB forms 2 homohexamers on either side of HJ DNA bound by 1 or 2 RuvA tetramers; 4 subunits per hexamer contact DNA at a time. Coordinated motions by a converter formed by DNA-disengaged RuvB subunits stimulates ATP hydrolysis and nucleotide exchange. Immobilization of the converter enables RuvB to convert the ATP-contained energy into a lever motion, pulling 2 nucleotides of DNA out of the RuvA tetramer per ATP hydrolyzed, thus driving DNA branch migration. The RuvB motors rotate together with the DNA substrate, which together with the progressing nucleotide cycle form the mechanistic basis for DNA recombination by continuous HJ branch migration. Branch migration allows RuvC to scan DNA until it finds its consensus sequence, where it cleaves and resolves cruciform DNA. This chain is Holliday junction branch migration complex subunit RuvB, found in Nitratidesulfovibrio vulgaris (strain ATCC 29579 / DSM 644 / CCUG 34227 / NCIMB 8303 / VKM B-1760 / Hildenborough) (Desulfovibrio vulgaris).